The sequence spans 932 residues: Ribosome biogenesis protein ERB1 (932 aa).

Residues M1–G18 show a composition bias toward low complexity. The tract at residues M1–L229 is disordered. The span at P27 to A36 shows a compositional bias: polar residues. 2 stretches are compositionally biased toward acidic residues: residues V57–S119 and D150–E172. Low complexity predominate over residues S175–S184. WD repeat units lie at residues P555–S594 and A604–K644. The segment at S679–A698 is disordered. 4 WD repeats span residues S762–T800, S803–K842, Y846–E885, and K901–T932.

This sequence belongs to the WD repeat BOP1/ERB1 family. Component of the NOP7 complex, composed of ERB1, NOP7 and YTM1. The complex is held together by ERB1, which interacts with NOP7 via its N-terminal domain and with YTM1 via a high-affinity interaction between the seven-bladed beta-propeller domains of the 2 proteins. The NOP7 complex associates with the 66S pre-ribosome.

The protein resides in the nucleus. The protein localises to the nucleolus. It is found in the nucleoplasm. In terms of biological role, component of the NOP7 complex, which is required for maturation of the 25S and 5.8S ribosomal RNAs and formation of the 60S ribosome. In Mycosarcoma maydis (Corn smut fungus), this protein is Ribosome biogenesis protein ERB1.